The chain runs to 1426 residues: Epidermal growth factor receptor (1426 aa).

Positions 1–30 (MLLRRRNGPCPFPLLLLLLAHCICIWPASA) are cleaved as a signal peptide. Residues 31-868 (ARDRYARQNN…SKITANLDVN (838 aa)) lie on the Extracellular side of the membrane. N-linked (GlcNAc...) asparagine glycans are attached at residues N128, N241, N419, N443, N482, N569, N599, N617, N816, N823, and N828. The helical transmembrane segment at 869-889 (MIFIITGAVLVPTICILCVVT) threads the bilayer. Residues 890 to 1426 (YICRQKQKAK…HRNRNTETRV (537 aa)) are Cytoplasmic-facing. At T902 the chain carries Phosphothreonine; by PKC. Positions 938 to 1198 (LRKGGVLGMG…QLTTVFAEFA (261 aa)) constitute a Protein kinase domain. ATP-binding positions include 944-952 (LGMGAFGRV) and K971. The Proton acceptor role is filled by D1063. The interval 1232 to 1297 (PTTDGSEAIA…DSSAREVGVG (66 aa)) is disordered. Basic and acidic residues predominate over residues 1257 to 1276 (HRTDCTDEMPKLNRYCKDPS). Y1310 bears the Phosphotyrosine; by autocatalysis mark.

It belongs to the protein kinase superfamily. Tyr protein kinase family. EGF receptor subfamily. Homodimer. Binding of the ligand spitz triggers homodimerization of the receptor however, it is able to form dimers, albeit weakly, in the absence of spitz. Interacts (when phosphorylated on tyrosine residues) with Vav (via SH2 domain). Interacts (when ubiquitinated) with Graf. May interact (when phosphorylated) with EGFRAP (via SH2 domain). In terms of processing, ubiquitination by Cbl in response to high spi, promotes its interaction with Graf and thus facilitates its GPI-enriched endocytic compartment (GEEC) mediated endocytosis and its subsequent degradation. Ubiquitously expressed in embryos. In larvae, uniform expression is seen in wing disks, genital disk, anlagen of testis and ovary, and brain cortex. In eye-antenna disk, highest expression is anterior to morphogenetic furrow, levels remain high in photoreceptor precursor cells. This pattern is reversed in posterior eye disk. In adults expression is high in brain cortex and thoracic and abdominal ganglia.

The protein resides in the membrane. It catalyses the reaction L-tyrosyl-[protein] + ATP = O-phospho-L-tyrosyl-[protein] + ADP + H(+). Receptor tyrosine kinase, binding ligands of the EGF family and activating several signaling cascades to convert extracellular cues into appropriate cellular responses. Known ligands include spitz, gurken, vein and giant-lens. Transduces the signal through the ras-raf-MAPK pathway. Critical for the proliferation of imaginal tissues, and for the determination of both the antero-posterior and dorso-ventral polarities of the oocyte. In the embryo, plays a role in the establishment of ventral cell fates, maintenance of amnioserosa and ventral neuroectodermal cells, germ band retraction, cell fate specification in the central nervous system, and production and repair of the cuticle. During dorsal closure (DC) functions with the dpp- and ACK-signaling pathways to regulate expression of the myosin zip in the embryonic epidermis and amnioserosa (AS), and thus coordinate the progression of epidermal cell shape changes required for correct DC. In the embryonic epidermis, functions by negatively regulating dpp and consequently the dpp-dependent expression of the myosin zip. In the AS, negatively regulates the production/ and or secretion of a diffusible signal which, is produced by the ACK-signaling pathway, and acts in the AS and epidermal cells to promote zip expression. Also required in the AS to inhibit or delay apoptosis, and consequently slow the rate of DC. Therefore functions at multiple levels to negatively regulate morphogenesis during DC, suggesting that it acts as a general brake mechanism for adjusting the rate of dorsal closure to ensure that closure proceeds smoothly and without loss of epidermal integrity. During oogenesis, one of two tyrosine kinase chemoattractant receptors (Egfr and Pvr), that function in the border cells (BC) to detect guidance cues from the oocyte and transduce this information to the guidance pathway that regulate the collective migration of the BC cluster through the nurse cells to the oocyte. The polypeptide is Epidermal growth factor receptor (Egfr) (Drosophila melanogaster (Fruit fly)).